Here is a 485-residue protein sequence, read N- to C-terminus: Glutamate--tRNA ligase 1 (485 aa).

The 'HIGH' region motif lies at 10-20 (PSPTGAIHIGN). The short motif at 252–256 (KLSKR) is the 'KMSKS' region element. Lys-255 lines the ATP pocket.

The protein belongs to the class-I aminoacyl-tRNA synthetase family. Glutamate--tRNA ligase type 1 subfamily. Monomer.

Its subcellular location is the cytoplasm. It carries out the reaction tRNA(Glu) + L-glutamate + ATP = L-glutamyl-tRNA(Glu) + AMP + diphosphate. Its function is as follows. Catalyzes the attachment of glutamate to tRNA(Glu) in a two-step reaction: glutamate is first activated by ATP to form Glu-AMP and then transferred to the acceptor end of tRNA(Glu). In Thermoanaerobacter pseudethanolicus (strain ATCC 33223 / 39E) (Clostridium thermohydrosulfuricum), this protein is Glutamate--tRNA ligase 1.